The chain runs to 1407 residues: DNA-directed RNA polymerase subunit beta' (1407 aa).

4 residues coordinate Zn(2+): cysteine 70, cysteine 72, cysteine 85, and cysteine 88. Aspartate 460, aspartate 462, and aspartate 464 together coordinate Mg(2+). Zn(2+)-binding residues include cysteine 814, cysteine 888, cysteine 895, and cysteine 898. Lysine 972 bears the N6-acetyllysine mark.

The protein belongs to the RNA polymerase beta' chain family. In terms of assembly, the RNAP catalytic core consists of 2 alpha, 1 beta, 1 beta' and 1 omega subunit. When a sigma factor is associated with the core the holoenzyme is formed, which can initiate transcription. The cofactor is Mg(2+). It depends on Zn(2+) as a cofactor.

It carries out the reaction RNA(n) + a ribonucleoside 5'-triphosphate = RNA(n+1) + diphosphate. Its function is as follows. DNA-dependent RNA polymerase catalyzes the transcription of DNA into RNA using the four ribonucleoside triphosphates as substrates. In Escherichia coli O6:H1 (strain CFT073 / ATCC 700928 / UPEC), this protein is DNA-directed RNA polymerase subunit beta'.